The primary structure comprises 147 residues: Augurin (147 aa).

Residues 1 to 31 (MANSSARPAFLVMTALALLLLLCVGPGGISG) form the signal peptide. 2 propeptides span residues 32–68 (NKLK…LRRP) and 132–147 (SAHS…YDDY).

This sequence belongs to the augurin family.

It localises to the secreted. The protein localises to the cytoplasm. Its subcellular location is the apical cell membrane. In terms of biological role, probable hormone that may attenuate cell proliferation and induce senescence of oligodendrocyte and neural precursor cells in the central nervous system. ECRG4-induced senescence is characterized by G1 arrest, RB1 dephosphorylation and accelerated CCND1 and CCND3 proteasomal degradation. This chain is Augurin, found in Bos taurus (Bovine).